We begin with the raw amino-acid sequence, 197 residues long: 7-methyl-GTP pyrophosphatase (197 aa).

D69 serves as the catalytic Proton acceptor.

It belongs to the Maf family. YceF subfamily. A divalent metal cation is required as a cofactor.

It localises to the cytoplasm. The enzyme catalyses N(7)-methyl-GTP + H2O = N(7)-methyl-GMP + diphosphate + H(+). Nucleoside triphosphate pyrophosphatase that hydrolyzes 7-methyl-GTP (m(7)GTP). May have a dual role in cell division arrest and in preventing the incorporation of modified nucleotides into cellular nucleic acids. In Pectobacterium atrosepticum (strain SCRI 1043 / ATCC BAA-672) (Erwinia carotovora subsp. atroseptica), this protein is 7-methyl-GTP pyrophosphatase.